We begin with the raw amino-acid sequence, 222 residues long: Chromatin-associated protein SWI6 (222 aa).

A compositionally biased stretch (basic and acidic residues) spans 1–15 (MPVIKKEELSQKKDL). Disordered regions lie at residues 1–26 (MPVIKKEELSQKKDLESEEEDSGLED) and 77–147 (ETQD…DRQY). Positions 16-26 (ESEEEDSGLED) are enriched in acidic residues. A Chromo domain is found at 28–87 (YEVEKVIKHRGKGKNIEFLVRWKGYGPEYDTWEPTENVASAEEAVAAYWETQDKTATAPR).

In terms of assembly, interacts with DMT5.

The protein resides in the nucleus. Its function is as follows. Recognizes and binds histone H3 tails methylated at 'Lys-9', leading to epigenetic repression. Localizes DMT5 to heterochromatin characterized by trimethylation of histone H3 tails at 'Lys-9'. This Cryptococcus neoformans var. grubii serotype A (strain H99 / ATCC 208821 / CBS 10515 / FGSC 9487) (Filobasidiella neoformans var. grubii) protein is Chromatin-associated protein SWI6.